A 641-amino-acid chain; its full sequence is Kelch-like protein 22 (641 aa).

The disordered stretch occupies residues 1-25; the sequence is MAEDLETMKPSQAPQQPSLPQGSSK. Residues 10 to 24 show a composition bias toward low complexity; the sequence is PSQAPQQPSLPQGSS. The BTB domain occupies 50–117; the sequence is FDVVLKVEGK…IYTSDLALSV (68 aa). Kelch repeat units lie at residues 299–349, 350–399, 400–446, 448–493, 494–544, and 545–593; these read CVVG…VLNN, FVYL…VLGD, FLYA…ALDG, MYVA…ALQE, KIYL…VLAK, and KIFV…VLTL.

As to quaternary structure, component of the BCR(KLHL22) E3 ubiquitin ligase complex, at least composed of cul3, klhl22 and rbx1.

It localises to the cytoplasm. The protein localises to the cytosol. Its subcellular location is the cytoskeleton. It is found in the microtubule organizing center. The protein resides in the centrosome. It localises to the spindle. The protein localises to the nucleus. Its subcellular location is the lysosome. Its pathway is protein modification; protein ubiquitination. In terms of biological role, substrate-specific adapter of a BCR (BTB-CUL3-RBX1) E3 ubiquitin ligase complex. The BCR(KLHL22) ubiquitin ligase complex could mediate the monoubiquitination of PLK1 and regulate its activity in spindle assembly checkpoint (SAC) and chromosome segregation. The BCR(KLHL22) ubiquitin ligase complex may also be responsible for the ubiquitin-dependent proteasomal degradation of DEPDC5 and the activation of the TORC1 pathway. The polypeptide is Kelch-like protein 22 (klhl22) (Xenopus tropicalis (Western clawed frog)).